The primary structure comprises 226 residues: ATP synthase F(0) complex subunit a (226 aa).

Transmembrane regions (helical) follow at residues 12-32 (PTMMGLPIVILIIMFPSILFP), 68-88 (WTLMLMSLILFIGSTNLLGLL), 97-117 (QLSMNLGMAIPLWAGTVFMGF), 135-155 (IFLIPMLVIIETISLFIQPMA), 164-184 (ITAGHLLIHLIGGATLALMDI), and 189-209 (ALITFIILILLTILEFAVAMI).

This sequence belongs to the ATPase A chain family. In terms of assembly, component of the ATP synthase complex composed at least of ATP5F1A/subunit alpha, ATP5F1B/subunit beta, ATP5MC1/subunit c (homooctomer), MT-ATP6/subunit a, MT-ATP8/subunit 8, ATP5ME/subunit e, ATP5MF/subunit f, ATP5MG/subunit g, ATP5MK/subunit k, ATP5MJ/subunit j, ATP5F1C/subunit gamma, ATP5F1D/subunit delta, ATP5F1E/subunit epsilon, ATP5PF/subunit F6, ATP5PB/subunit b, ATP5PD/subunit d, ATP5PO/subunit OSCP. ATP synthase complex consists of a soluble F(1) head domain (subunits alpha(3) and beta(3)) - the catalytic core - and a membrane F(0) domain - the membrane proton channel (subunits c, a, 8, e, f, g, k and j). These two domains are linked by a central stalk (subunits gamma, delta, and epsilon) rotating inside the F1 region and a stationary peripheral stalk (subunits F6, b, d, and OSCP). Interacts with DNAJC30; interaction is direct.

It is found in the mitochondrion inner membrane. It carries out the reaction H(+)(in) = H(+)(out). Functionally, subunit a, of the mitochondrial membrane ATP synthase complex (F(1)F(0) ATP synthase or Complex V) that produces ATP from ADP in the presence of a proton gradient across the membrane which is generated by electron transport complexes of the respiratory chain. ATP synthase complex consist of a soluble F(1) head domain - the catalytic core - and a membrane F(1) domain - the membrane proton channel. These two domains are linked by a central stalk rotating inside the F(1) region and a stationary peripheral stalk. During catalysis, ATP synthesis in the catalytic domain of F(1) is coupled via a rotary mechanism of the central stalk subunits to proton translocation. With the subunit c (ATP5MC1), forms the proton-conducting channel in the F(0) domain, that contains two crucial half-channels (inlet and outlet) that facilitate proton movement from the mitochondrial intermembrane space (IMS) into the matrix. Protons are taken up via the inlet half-channel and released through the outlet half-channel, following a Grotthuss mechanism. The protein is ATP synthase F(0) complex subunit a of Equus asinus (Donkey).